A 238-amino-acid polypeptide reads, in one-letter code: ATP synthase subunit a (238 aa).

A run of 5 helical transmembrane segments spans residues 15–35, 76–96, 111–131, 167–187, and 208–230; these read IFNL…FVFI, YSLF…LGLM, PTAN…LTHI, LALR…LLLL, and AFSV…VYLG.

It belongs to the ATPase A chain family. F-type ATPases have 2 components, CF(1) - the catalytic core - and CF(0) - the membrane proton channel. CF(1) has five subunits: alpha(3), beta(3), gamma(1), delta(1), epsilon(1). CF(0) has three main subunits: a(1), b(2) and c(9-12). The alpha and beta chains form an alternating ring which encloses part of the gamma chain. CF(1) is attached to CF(0) by a central stalk formed by the gamma and epsilon chains, while a peripheral stalk is formed by the delta and b chains.

It is found in the cell membrane. Key component of the proton channel; it plays a direct role in the translocation of protons across the membrane. This chain is ATP synthase subunit a, found in Streptococcus pneumoniae (strain 70585).